An 83-amino-acid polypeptide reads, in one-letter code: Disintegrin isoform D-3 (83 aa).

The Disintegrin domain occupies 2-83 (PPVCGNELLE…GKSSDCPWNH (82 aa)). Intrachain disulfides connect Cys5/Cys24, Cys16/Cys34, Cys18/Cys29, Cys28/Cys51, Cys42/Cys48, Cys47/Cys72, and Cys60/Cys79. The short motif at 64 to 66 (RGD) is the Cell attachment site element.

This sequence belongs to the venom metalloproteinase (M12B) family. P-II subfamily. P-IIa sub-subfamily. In terms of assembly, monomer (disintegrin). As to expression, expressed by the venom gland.

It localises to the secreted. Its function is as follows. Inhibits fibrinogen interaction with platelets. Acts by binding to alpha-IIb/beta-3 (ITGA2B/ITGB3) on the platelet surface and inhibits aggregation induced by ADP, thrombin, platelet-activating factor and collagen. The chain is Disintegrin isoform D-3 from Bitis arietans (African puff adder).